We begin with the raw amino-acid sequence, 107 residues long: uncharacterized protein (107 aa).

Polar residues predominate over residues 1–14 (MTERNASGRMNTKG). The tract at residues 1–20 (MTERNASGRMNTKGRSIKET) is disordered.

Its subcellular location is the mitochondrion. This is an uncharacterized protein from Arabidopsis thaliana (Mouse-ear cress).